The following is a 239-amino-acid chain: MFKRSGSLSLALMSSFCSSSLATPLSSAEFDHVARKCAPSVATSTLAAIAKVESRFDPLAIHDNTTGETLHWQDHTQATQVVRHRLDARHSLDVGLMQINSRNFSMLGLTPDGALKACPSLSAAANMLKSRYAGGETIDEKQIALRRAISAYNTGNFIRGFANGYVRKVETAAQSLVPALIEPPQDDHKALKSEDTWDVWGSYQRRSQEDGVGGSIAPQPPDQDNGKSADDNQVLFDLY.

An N-terminal signal peptide occupies residues 1–28 (MFKRSGSLSLALMSSFCSSSLATPLSSA). The tract at residues 202-232 (SYQRRSQEDGVGGSIAPQPPDQDNGKSADDN) is disordered.

The protein belongs to the virb1 family.

VirB proteins are suggested to act at the bacterial surface and there play an important role in directing T-DNA transfer to plant cells. This Agrobacterium tumefaciens (strain 15955) protein is Protein virB1 (virB1).